The following is a 276-amino-acid chain: CTD small phosphatase-like protein (276 aa).

Positions 1–25 (MDGPAIITQVTNPKEDEGRLPGAGE) are disordered. Positions 102-260 (LDYGKKCVVI…LDLIPFFEGL (159 aa)) constitute an FCP1 homology domain. Residue aspartate 112 is the 4-aspartylphosphate intermediate of the active site. Residues aspartate 112, aspartate 114, and asparagine 223 each contribute to the Mg(2+) site. The Proton donor role is filled by aspartate 114.

In terms of assembly, interacts with REST. Monomer. Mg(2+) serves as cofactor. As to expression, expression is restricted to non-neuronal tissues.

The protein resides in the nucleus. The catalysed reaction is O-phospho-L-seryl-[protein] + H2O = L-seryl-[protein] + phosphate. The enzyme catalyses O-phospho-L-threonyl-[protein] + H2O = L-threonyl-[protein] + phosphate. Functionally, recruited by REST to neuronal genes that contain RE-1 elements, leading to neuronal gene silencing in non-neuronal cells. Preferentially catalyzes the dephosphorylation of 'Ser-5' within the tandem 7 residue repeats in the C-terminal domain (CTD) of the largest RNA polymerase II subunit POLR2A. Negatively regulates RNA polymerase II transcription, possibly by controlling the transition from initiation/capping to processive transcript elongation. The sequence is that of CTD small phosphatase-like protein (CTDSPL) from Homo sapiens (Human).